A 521-amino-acid chain; its full sequence is Probable glycogen synthase (521 aa).

It belongs to the glycosyltransferase 1 family. Bacterial/plant glycogen synthase subfamily.

It catalyses the reaction [(1-&gt;4)-alpha-D-glucosyl](n) + ADP-alpha-D-glucose = [(1-&gt;4)-alpha-D-glucosyl](n+1) + ADP + H(+). It participates in glycan biosynthesis; glycogen biosynthesis. Functionally, synthesizes alpha-1,4-glucan chains using ADP-glucose. The sequence is that of Probable glycogen synthase (glgA) from Methanocaldococcus jannaschii (strain ATCC 43067 / DSM 2661 / JAL-1 / JCM 10045 / NBRC 100440) (Methanococcus jannaschii).